The chain runs to 191 residues: Probable DNA-directed RNA polymerase subunit delta (191 aa).

The HTH HARE-type domain maps to 14-83; it reads LSMIEVARAI…GENKWGLRSW (70 aa). Composition is skewed to acidic residues over residues 117-136 and 142-191; these read GDED…DFTE and EYDE…EEEV. A disordered region spans residues 117 to 191; it reads GDEDAIDYND…DEEEEEEEEV (75 aa).

It belongs to the RpoE family. In terms of assembly, RNAP is composed of a core of 2 alpha, a beta and a beta' subunits. The core is associated with a delta subunit and one of several sigma factors.

In terms of biological role, participates in both the initiation and recycling phases of transcription. In the presence of the delta subunit, RNAP displays an increased specificity of transcription, a decreased affinity for nucleic acids, and an increased efficiency of RNA synthesis because of enhanced recycling. The sequence is that of Probable DNA-directed RNA polymerase subunit delta from Streptococcus agalactiae serotype Ia (strain ATCC 27591 / A909 / CDC SS700).